Consider the following 101-residue polypeptide: Small ribosomal subunit protein uS14 (101 aa).

It belongs to the universal ribosomal protein uS14 family. In terms of assembly, part of the 30S ribosomal subunit. Contacts proteins S3 and S10.

Binds 16S rRNA, required for the assembly of 30S particles and may also be responsible for determining the conformation of the 16S rRNA at the A site. The polypeptide is Small ribosomal subunit protein uS14 (Gluconobacter oxydans (strain 621H) (Gluconobacter suboxydans)).